Reading from the N-terminus, the 589-residue chain is Proline--tRNA ligase (589 aa).

The protein belongs to the class-II aminoacyl-tRNA synthetase family. ProS type 1 subfamily. In terms of assembly, homodimer.

It is found in the cytoplasm. The enzyme catalyses tRNA(Pro) + L-proline + ATP = L-prolyl-tRNA(Pro) + AMP + diphosphate. In terms of biological role, catalyzes the attachment of proline to tRNA(Pro) in a two-step reaction: proline is first activated by ATP to form Pro-AMP and then transferred to the acceptor end of tRNA(Pro). As ProRS can inadvertently accommodate and process non-cognate amino acids such as alanine and cysteine, to avoid such errors it has two additional distinct editing activities against alanine. One activity is designated as 'pretransfer' editing and involves the tRNA(Pro)-independent hydrolysis of activated Ala-AMP. The other activity is designated 'posttransfer' editing and involves deacylation of mischarged Ala-tRNA(Pro). The misacylated Cys-tRNA(Pro) is not edited by ProRS. The protein is Proline--tRNA ligase of Nocardioides sp. (strain ATCC BAA-499 / JS614).